Reading from the N-terminus, the 363-residue chain is Osmoprotective compounds uptake ATP-binding protein GgtA (363 aa).

The 231-residue stretch at 4–234 (VSFEQVTKQF…PANLFVAGFI (231 aa)) folds into the ABC transporter domain. 36-43 (GPSGCGKT) serves as a coordination point for ATP.

The protein belongs to the ABC transporter superfamily. The complex is composed of two ATP-binding proteins (GgtA), two transmembrane proteins (GgtC and GgtD) and a solute-binding protein (GgtB).

The protein localises to the cell membrane. Functionally, part of the ABC transporter complex GgtABCD involved in the uptake of the osmoprotective compounds glucosylglycerol (GG), sucrose and trehalose. Responsible for energy coupling to the transport system. This Synechocystis sp. (strain ATCC 27184 / PCC 6803 / Kazusa) protein is Osmoprotective compounds uptake ATP-binding protein GgtA.